Consider the following 224-residue polypeptide: Viral late gene transcription factor 3 (224 aa).

A zinc finger lies at 6 to 26 (CSGCRHNGIVSEQGYEYCIFC).

The protein belongs to the orthopoxvirus VLTF-3/OPG127 family. Interacts with the late transcription elongation factor VLTF-4/OPG110. Interacts with the late transcription factors VLTF-1/OPG093.

In terms of biological role, acts with RNA polymerase to initiate transcription from late gene promoters. The protein is Viral late gene transcription factor 3 (OPG127) of Vaccinia virus (strain Ankara) (VACV).